A 563-amino-acid chain; its full sequence is Eukaryotic translation initiation factor 3 subunit D-1 (563 aa).

The interval V98 to S167 is disordered. Residues K100–N121 show a composition bias toward basic residues. T128 is subject to Phosphothreonine. Residues E291–P305 form an RNA gate region.

The protein belongs to the eIF-3 subunit D family. As to quaternary structure, component of the eukaryotic translation initiation factor 3 (eIF-3) complex. The eIF-3 complex interacts with pix.

It localises to the cytoplasm. Functionally, mRNA cap-binding component of the eukaryotic translation initiation factor 3 (eIF-3) complex, which is involved in protein synthesis of a specialized repertoire of mRNAs and, together with other initiation factors, stimulates binding of mRNA and methionyl-tRNAi to the 40S ribosome. The eIF-3 complex specifically targets and initiates translation of a subset of mRNAs involved in cell proliferation. In the eIF-3 complex, eif3d specifically recognizes and binds the 7-methylguanosine cap of a subset of mRNAs. The sequence is that of Eukaryotic translation initiation factor 3 subunit D-1 from Drosophila virilis (Fruit fly).